The chain runs to 632 residues: Probable potassium transport system protein Kup 2 (632 aa).

12 helical membrane passes run 19-39 (FWGL…TSPL), 58-78 (MIVL…VTAK), 110-130 (MFLM…SMIT), 147-167 (PALE…LFAV), 178-198 (AFGP…IVHI), 216-236 (FLLS…LAVT), 257-277 (WLFF…ALVL), 290-310 (MVPE…TVIA), 347-367 (IYLP…VLLF), 377-397 (YGIA…VVIW), 404-424 (AAVA…FFSA), and 429-449 (LFEG…TIWT).

This sequence belongs to the HAK/KUP transporter (TC 2.A.72) family.

The protein localises to the cell inner membrane. It catalyses the reaction K(+)(in) + H(+)(in) = K(+)(out) + H(+)(out). In terms of biological role, transport of potassium into the cell. Likely operates as a K(+):H(+) symporter. The protein is Probable potassium transport system protein Kup 2 of Bradyrhizobium sp. (strain BTAi1 / ATCC BAA-1182).